Reading from the N-terminus, the 459-residue chain is tRNA modification GTPase MnmE (459 aa).

(6S)-5-formyl-5,6,7,8-tetrahydrofolate is bound by residues Arg-22, Glu-85, and Arg-124. Residues 221–380 (GLSTVIVGKP…LEIQIRDLFF (160 aa)) enclose the TrmE-type G domain. Asn-231 serves as a coordination point for K(+). GTP-binding positions include 231–236 (NVGKSS), 250–256 (TEVAGTT), and 275–278 (DTAG). Ser-235 contacts Mg(2+). K(+) contacts are provided by Thr-250, Val-252, and Thr-255. Thr-256 serves as a coordination point for Mg(2+). Position 459 (Lys-459) interacts with (6S)-5-formyl-5,6,7,8-tetrahydrofolate.

Belongs to the TRAFAC class TrmE-Era-EngA-EngB-Septin-like GTPase superfamily. TrmE GTPase family. As to quaternary structure, homodimer. Heterotetramer of two MnmE and two MnmG subunits. The cofactor is K(+).

Its subcellular location is the cytoplasm. Its function is as follows. Exhibits a very high intrinsic GTPase hydrolysis rate. Involved in the addition of a carboxymethylaminomethyl (cmnm) group at the wobble position (U34) of certain tRNAs, forming tRNA-cmnm(5)s(2)U34. This chain is tRNA modification GTPase MnmE, found in Staphylococcus aureus (strain bovine RF122 / ET3-1).